The sequence spans 215 residues: Methylosome subunit pICln (215 aa).

Disordered regions lie at residues 88 to 120 (GDPP…DEDD) and 160 to 215 (HPDS…DADE). Composition is skewed to acidic residues over residues 105–120 (AEVD…DEDD), 167–190 (DSED…EDDA), and 203–215 (LDDD…DADE).

The protein belongs to the pICln (TC 1.A.47) family. As to quaternary structure, component of the methylosome, a 20S complex containing at least CLNS1A/pICln, PRMT5/SKB1 and WDR77/MEP50; may mediate SNRPD1 and SNRPD3 methylation. Forms a 6S pICln-Sm complex composed of CLNS1A/pICln, SNRPD1, SNRPD2, SNRPE, SNRPF and SNRPG; ring-like structure where CLNS1A/pICln mimics additional Sm proteins and which is unable to assemble into the core snRNP.

The protein localises to the cytoplasm. It is found in the cytosol. It localises to the nucleus. Its subcellular location is the cytoskeleton. In terms of biological role, involved in both the assembly of spliceosomal snRNPs and the methylation of Sm proteins. Chaperone that regulates the assembly of spliceosomal U1, U2, U4 and U5 small nuclear ribonucleoproteins (snRNPs), the building blocks of the spliceosome, and thereby plays an important role in the splicing of cellular pre-mRNAs. Most spliceosomal snRNPs contain a common set of Sm proteins SNRPB, SNRPD1, SNRPD2, SNRPD3, SNRPE, SNRPF and SNRPG that assemble in a heptameric protein ring on the Sm site of the small nuclear RNA to form the core snRNP (Sm core). In the cytosol, the Sm proteins SNRPD1, SNRPD2, SNRPE, SNRPF and SNRPG are trapped in an inactive 6S pICln-Sm complex by the chaperone CLNS1A that controls the assembly of the core snRNP. Dissociation by the SMN complex of CLNS1A from the trapped Sm proteins and their transfer to an SMN-Sm complex triggers the assembly of core snRNPs and their transport to the nucleus. The protein is Methylosome subunit pICln (icln) of Drosophila melanogaster (Fruit fly).